We begin with the raw amino-acid sequence, 275 residues long: Large ribosomal subunit protein uL2 (275 aa).

The tract at residues 224–275 (AMNPVDHPHGGGEGKAPIGHPGPLTPWGKPALGYKTRKKGKASDKFIVKRRK) is disordered. The segment covering 264–275 (KASDKFIVKRRK) has biased composition (basic and acidic residues).

This sequence belongs to the universal ribosomal protein uL2 family. Part of the 50S ribosomal subunit. Forms a bridge to the 30S subunit in the 70S ribosome.

One of the primary rRNA binding proteins. Required for association of the 30S and 50S subunits to form the 70S ribosome, for tRNA binding and peptide bond formation. It has been suggested to have peptidyltransferase activity; this is somewhat controversial. Makes several contacts with the 16S rRNA in the 70S ribosome. This chain is Large ribosomal subunit protein uL2, found in Caldanaerobacter subterraneus subsp. tengcongensis (strain DSM 15242 / JCM 11007 / NBRC 100824 / MB4) (Thermoanaerobacter tengcongensis).